We begin with the raw amino-acid sequence, 336 residues long: Probable allantoicase 2 (336 aa).

The protein belongs to the allantoicase family.

It carries out the reaction allantoate + H2O = (S)-ureidoglycolate + urea. It functions in the pathway nitrogen metabolism; (S)-allantoin degradation; (S)-ureidoglycolate from allantoate (aminidohydrolase route): step 1/1. The polypeptide is Probable allantoicase 2 (Burkholderia mallei (strain ATCC 23344)).